The chain runs to 387 residues: Cytochrome b (387 aa).

Residues 32-52 (LGSLLGLCLVIQIASGVFLAM) traverse the membrane as a helical segment. Residues histidine 82 and histidine 96 each coordinate heme b. The next 8 helical transmembrane spans lie at 85-105 (GASFFFICMYLHIGKALYYGS), 116-136 (IGVVIFILTMAIAFMGYCLVY), 151-171 (LSAIPFIGNDIVPFIWGGFSV), 179-199 (FFALHFLLPFILAALVCMHLM), 225-245 (FIFKDLITVFVFLLIFSLFVF), 289-309 (LGGVIAMFGAILILLSLPYTD), 324-344 (LAFYLFVFNFILLGNLGQLHV), and 350-370 (QLGQFATAYYFAHYIIVVPVI). Heme b contacts are provided by histidine 183 and histidine 197.

This sequence belongs to the cytochrome b family. Component of the ubiquinol-cytochrome c oxidoreductase (cytochrome b-c1 complex, complex III, CIII), a multisubunit enzyme composed of 10 subunits. The complex is composed of 3 respiratory subunits cytochrome b (COB), cytochrome c1 (CYT1) and Rieske protein (RIP1), 2 core protein subunits COR1 and QCR2, and 5 low-molecular weight protein subunits QCR6, QCR7, QCR8, QCR9 and QCR10. The complex exists as an obligatory dimer and forms supercomplexes (SCs) in the inner mitochondrial membrane with a monomer or a dimer of cytochrome c oxidase (complex IV, CIV), resulting in 2 different assemblies (supercomplexes III(2)IV and III(2)IV(2)). The cofactor is heme b.

It localises to the mitochondrion inner membrane. Component of the ubiquinol-cytochrome c oxidoreductase, a multisubunit transmembrane complex that is part of the mitochondrial electron transport chain which drives oxidative phosphorylation. The complex plays an important role in the uptake of multiple carbon sources present in different host niches. This chain is Cytochrome b, found in Candida albicans (strain SC5314 / ATCC MYA-2876) (Yeast).